The following is a 104-amino-acid chain: Phosphoribosyl-ATP pyrophosphatase (104 aa).

Belongs to the PRA-PH family.

Its subcellular location is the cytoplasm. It catalyses the reaction 1-(5-phospho-beta-D-ribosyl)-ATP + H2O = 1-(5-phospho-beta-D-ribosyl)-5'-AMP + diphosphate + H(+). It functions in the pathway amino-acid biosynthesis; L-histidine biosynthesis; L-histidine from 5-phospho-alpha-D-ribose 1-diphosphate: step 2/9. This is Phosphoribosyl-ATP pyrophosphatase from Methanocorpusculum labreanum (strain ATCC 43576 / DSM 4855 / Z).